Reading from the N-terminus, the 476-residue chain is NADH-quinone oxidoreductase subunit N (476 aa).

Transmembrane regions (helical) follow at residues 8–28 (ITTE…GLLV), 35–55 (GLGS…IINW), 71–91 (YATF…LGSF), 102–122 (FEYY…ASAG), 124–144 (FITL…LVAF), 159–179 (ILLA…VYGA), 201–221 (LIVG…AVPF), 239–259 (FLAV…FAGG), 267–287 (WTLL…LVAI), 295–315 (MLAY…VSAT), 322–342 (VMFY…VVAI), 366–386 (ASVM…AGFV), 405–425 (LGLI…LVMF), and 437–457 (VGGA…ILGI).

It belongs to the complex I subunit 2 family. As to quaternary structure, NDH-1 is composed of 14 different subunits. Subunits NuoA, H, J, K, L, M, N constitute the membrane sector of the complex.

It is found in the cell membrane. It carries out the reaction a quinone + NADH + 5 H(+)(in) = a quinol + NAD(+) + 4 H(+)(out). Functionally, NDH-1 shuttles electrons from NADH, via FMN and iron-sulfur (Fe-S) centers, to quinones in the respiratory chain. The immediate electron acceptor for the enzyme in this species is believed to be a menaquinone. Couples the redox reaction to proton translocation (for every two electrons transferred, four hydrogen ions are translocated across the cytoplasmic membrane), and thus conserves the redox energy in a proton gradient. This chain is NADH-quinone oxidoreductase subunit N, found in Desulforamulus reducens (strain ATCC BAA-1160 / DSM 100696 / MI-1) (Desulfotomaculum reducens).